The following is a 488-amino-acid chain: Malonate-semialdehyde dehydrogenase (488 aa).

7 residues coordinate NAD(+): Ala-150, Phe-152, Lys-176, Glu-179, Arg-180, Ser-229, and Thr-251. The active-site Nucleophile is the Cys-284. Glu-382 contributes to the NAD(+) binding site.

It belongs to the aldehyde dehydrogenase family. IolA subfamily. Homotetramer.

It carries out the reaction 3-oxopropanoate + NAD(+) + CoA + H2O = hydrogencarbonate + acetyl-CoA + NADH + H(+). The catalysed reaction is 2-methyl-3-oxopropanoate + NAD(+) + CoA + H2O = propanoyl-CoA + hydrogencarbonate + NADH + H(+). The protein operates within polyol metabolism; myo-inositol degradation into acetyl-CoA; acetyl-CoA from myo-inositol: step 7/7. Catalyzes the oxidation of malonate semialdehyde (MSA) and methylmalonate semialdehyde (MMSA) into acetyl-CoA and propanoyl-CoA, respectively. Is involved in a myo-inositol catabolic pathway. Bicarbonate, and not CO2, is the end-product of the enzymatic reaction. The chain is Malonate-semialdehyde dehydrogenase from Listeria monocytogenes serotype 4b (strain CLIP80459).